We begin with the raw amino-acid sequence, 375 residues long: MQCALYDAGRCRSCQWITQPIPEQLSAKTADLKNLLADFPVEEWCAPVSGPEQGFRNKAKMVVSGSVEKPLLGMLHRDGTPEDLCDCPLYPASFAPVFAALKPFIARAGLTPYNVARKRGELKYILLTESQSDGGMMLRFVLRSDTKLAQLRKALPWLHEQLPQLKVITVNIQPVHMAIMEGETEIYLTEHQALAERFNDVPLWIRPQSFFQTNPAVASQLYATARDWVRQLPVTHMWDLFCGVGGFGLHCATPDMQLTGIEIAPEAIACAKQSAAELGLTCLQFQALDSTQFATAQGEVPELVLVNPPRRGIGKPLCDYLSTMAPCFIIYSSCNAQTMAKDIRELPGYRIERVQLFDMFPHTAHYEVLTLQVKI.

[4Fe-4S] cluster-binding residues include Cys-3, Cys-11, Cys-14, and Cys-87. S-adenosyl-L-methionine contacts are provided by Gln-212, Phe-241, Glu-262, and Asn-307. The Nucleophile role is filled by Cys-334.

Belongs to the class I-like SAM-binding methyltransferase superfamily. RNA M5U methyltransferase family. RlmC subfamily.

The catalysed reaction is uridine(747) in 23S rRNA + S-adenosyl-L-methionine = 5-methyluridine(747) in 23S rRNA + S-adenosyl-L-homocysteine + H(+). Its function is as follows. Catalyzes the formation of 5-methyl-uridine at position 747 (m5U747) in 23S rRNA. This is 23S rRNA (uracil(747)-C(5))-methyltransferase RlmC from Shigella dysenteriae serotype 1 (strain Sd197).